Reading from the N-terminus, the 506-residue chain is Protein NEN3 (506 aa).

The Exonuclease domain maps to 15–176 (FFDLETAVPT…LDDVRMNLEV (162 aa)). Mg(2+) contacts are provided by D17 and E19. The active-site Proton donor/acceptor is the H164. D169 contacts Mg(2+). Disordered stretches follow at residues 204-240 (KSPR…SSVD) and 289-313 (AEEA…KDES). Positions 222 to 238 (SSTSSSSSPKTDPSSSS) are enriched in low complexity. The span at 290-299 (EEAKTVRQQD) shows a compositional bias: basic and acidic residues.

Mg(2+) is required as a cofactor.

In terms of biological role, probable exonuclease that may be involved in enuclation of sieve elements. The polypeptide is Protein NEN3 (NEN3) (Arabidopsis thaliana (Mouse-ear cress)).